An 82-amino-acid polypeptide reads, in one-letter code: U16-lycotoxin-Ls1b (82 aa).

Residues 1 to 22 (MSPKVQALLLLVGLITFLEVHA) form the signal peptide. The propeptide occupies 23–34 (EEELSETVESER). Disulfide bonds link Cys36/Cys51, Cys43/Cys56, Cys50/Cys67, and Cys58/Cys65.

It belongs to the neurotoxin 02 (plectoxin) family. 04 (U16-lycotoxin) subfamily. In terms of tissue distribution, expressed by the venom gland.

The protein resides in the secreted. This chain is U16-lycotoxin-Ls1b, found in Lycosa singoriensis (Wolf spider).